Reading from the N-terminus, the 643-residue chain is Nicastrin (643 aa).

Residues 1-20 form the signal peptide; the sequence is MRFKNVLVLLLLLVFSVINS. Residues 21–611 are Extracellular-facing; sequence EPSAPATISD…VFKIGNSTTE (591 aa). Cys42 and Cys54 are disulfide-bonded. N-linked (GlcNAc...) asparagine glycosylation is found at Asn96 and Asn166. Cystine bridges form between Cys204–Cys210 and Cys308–Cys318. 2 N-linked (GlcNAc...) asparagine glycosylation sites follow: Asn333 and Asn385. Cystine bridges form between Cys479-Cys486, Cys540-Cys551, and Cys546-Cys556. The N-linked (GlcNAc...) asparagine glycan is linked to Asn584. A helical transmembrane segment spans residues 612 to 632; it reads IWFLVSGLIELLVSIGLILYV. Over 633-643 the chain is Cytoplasmic; that stretch reads KKFLSNRYKLL.

The protein belongs to the nicastrin family. In terms of assembly, component of the gamma-secretase complex, a complex composed of a presenilin homodimer, nicastrin, aph1 and pen2.

It localises to the membrane. Functionally, essential subunit of the gamma-secretase complex, an endoprotease complex that catalyzes the intramembrane cleavage of integral membrane proteins such as Notch receptors and APP (amyloid-beta precursor protein). The sequence is that of Nicastrin from Dictyostelium purpureum (Slime mold).